Here is a 619-residue protein sequence, read N- to C-terminus: Sorting nexin-41 (619 aa).

The interval M1 to G95 is disordered. The PX domain occupies P108–W224. Residues R142, S144, K168, and R191 each contribute to the a 1,2-diacyl-sn-glycero-3-phospho-(1D-myo-inositol-3-phosphate) site. The segment at Y444–S510 is disordered. The segment covering P454–S467 has biased composition (basic and acidic residues).

The protein belongs to the sorting nexin family.

It localises to the endosome membrane. It is found in the endomembrane system. Its function is as follows. May be required for cytoplasm to vacuole transport (Cvt) and pexophagy. This Neurospora crassa (strain ATCC 24698 / 74-OR23-1A / CBS 708.71 / DSM 1257 / FGSC 987) protein is Sorting nexin-41 (vsp-6).